The following is a 331-amino-acid chain: MVSYKEAGVNIEEGYKSVDLIKKYASKTFTKGVLNNLGSFAGMFELPKYKNPVLVSGTDGVGTKLDIAFRMKKYNTVGIDCVAMCINDILCHGAKPLFFLDYIACGKLESEIAAQLVEGVSNGCIQSECALIGGETAEMPGFYRDGEYDIAGFAVGIAEKDEIIDGSKIEDGDILIGIASSGPHSNGYSLIRKLVEDLHKDFEGNKIGNTLLTPTKIYVKPVMKLLEKYNIKGMAHVTGGGFYENIPRMFKEDFTAVINKKSYPLPNIFSHLMSLGIEEDHMYNTFNMGIGFVLCVNEKDGENIIKDLIEMGEKGYKIGYVKKGNKSVELI.

This sequence belongs to the AIR synthase family.

The protein resides in the cytoplasm. It carries out the reaction 2-formamido-N(1)-(5-O-phospho-beta-D-ribosyl)acetamidine + ATP = 5-amino-1-(5-phospho-beta-D-ribosyl)imidazole + ADP + phosphate + H(+). The protein operates within purine metabolism; IMP biosynthesis via de novo pathway; 5-amino-1-(5-phospho-D-ribosyl)imidazole from N(2)-formyl-N(1)-(5-phospho-D-ribosyl)glycinamide: step 2/2. The protein is Phosphoribosylformylglycinamidine cyclo-ligase of Clostridium botulinum (strain Langeland / NCTC 10281 / Type F).